The chain runs to 290 residues: 4-diphosphocytidyl-2-C-methyl-D-erythritol kinase (290 aa).

Residue Lys8 is part of the active site. 89–99 (PIGAGVGGGSS) is a binding site for ATP. Residue Asp131 is part of the active site.

The protein belongs to the GHMP kinase family. IspE subfamily.

It carries out the reaction 4-CDP-2-C-methyl-D-erythritol + ATP = 4-CDP-2-C-methyl-D-erythritol 2-phosphate + ADP + H(+). Its pathway is isoprenoid biosynthesis; isopentenyl diphosphate biosynthesis via DXP pathway; isopentenyl diphosphate from 1-deoxy-D-xylulose 5-phosphate: step 3/6. In terms of biological role, catalyzes the phosphorylation of the position 2 hydroxy group of 4-diphosphocytidyl-2C-methyl-D-erythritol. This Chlamydia felis (strain Fe/C-56) (Chlamydophila felis) protein is 4-diphosphocytidyl-2-C-methyl-D-erythritol kinase.